The primary structure comprises 160 residues: Ureidoglycolate lyase (160 aa).

It belongs to the ureidoglycolate lyase family. In terms of assembly, homodimer. Requires Ni(2+) as cofactor.

The enzyme catalyses (S)-ureidoglycolate = urea + glyoxylate. The protein operates within nitrogen metabolism; (S)-allantoin degradation. Catalyzes the catabolism of the allantoin degradation intermediate (S)-ureidoglycolate, generating urea and glyoxylate. Involved in the anaerobic utilization of allantoin as sole nitrogen source. Reinforces the induction of genes involved in the degradation of allantoin and glyoxylate by producing glyoxylate. This Shigella flexneri serotype 5b (strain 8401) protein is Ureidoglycolate lyase.